A 139-amino-acid chain; its full sequence is Putative nickel-responsive regulator (139 aa).

Residues histidine 79, histidine 90, histidine 92, and cysteine 98 each contribute to the Ni(2+) site.

This sequence belongs to the transcriptional regulatory CopG/NikR family. It depends on Ni(2+) as a cofactor.

Its function is as follows. Transcriptional regulator. This chain is Putative nickel-responsive regulator, found in Anaeromyxobacter dehalogenans (strain 2CP-C).